The following is a 121-amino-acid chain: Prefoldin subunit beta (121 aa).

Belongs to the prefoldin subunit beta family. As to quaternary structure, heterohexamer of two alpha and four beta subunits.

It localises to the cytoplasm. In terms of biological role, molecular chaperone capable of stabilizing a range of proteins. Seems to fulfill an ATP-independent, HSP70-like function in archaeal de novo protein folding. In Caldivirga maquilingensis (strain ATCC 700844 / DSM 13496 / JCM 10307 / IC-167), this protein is Prefoldin subunit beta.